The sequence spans 350 residues: Galactokinase (350 aa).

14–17 (EHTD) provides a ligand contact to substrate. Residues serine 46 and 96-102 (GAGLSSS) contribute to the ATP site. Mg(2+)-binding residues include serine 102 and glutamate 134. Catalysis depends on aspartate 146, which acts as the Proton acceptor. Tyrosine 196 serves as a coordination point for substrate.

This sequence belongs to the GHMP kinase family. GalK subfamily.

The protein resides in the cytoplasm. The enzyme catalyses alpha-D-galactose + ATP = alpha-D-galactose 1-phosphate + ADP + H(+). Its pathway is carbohydrate metabolism; galactose metabolism. Functionally, catalyzes the transfer of the gamma-phosphate of ATP to D-galactose to form alpha-D-galactose-1-phosphate (Gal-1-P). The chain is Galactokinase from Thermotoga maritima (strain ATCC 43589 / DSM 3109 / JCM 10099 / NBRC 100826 / MSB8).